The sequence spans 200 residues: Adenylate kinase (200 aa).

An ATP-binding site is contributed by 10–15 (GAGKGT). Residues 30–59 (STGDMLRAAVAAETPVGLEAKAIMESGGLV) are NMP. AMP is bound by residues Thr-31, Arg-36, 57 to 59 (GLV), 85 to 88 (GFPR), and Gln-92. Positions 126-142 (KRAEETAARGQPVRKDD) are LID. Residue Arg-127 participates in ATP binding. Positions 139 and 150 each coordinate AMP. Lys-178 lines the ATP pocket.

Belongs to the adenylate kinase family. Monomer.

The protein localises to the cytoplasm. It catalyses the reaction AMP + ATP = 2 ADP. It participates in purine metabolism; AMP biosynthesis via salvage pathway; AMP from ADP: step 1/1. Its function is as follows. Catalyzes the reversible transfer of the terminal phosphate group between ATP and AMP. Plays an important role in cellular energy homeostasis and in adenine nucleotide metabolism. This chain is Adenylate kinase, found in Methylorubrum extorquens (strain CM4 / NCIMB 13688) (Methylobacterium extorquens).